Consider the following 1183-residue polypeptide: DNA-directed RNA polymerase subunit beta (1183 aa).

Belongs to the RNA polymerase beta chain family. The RNAP catalytic core consists of 2 alpha, 1 beta, 1 beta' and 1 omega subunit. When a sigma factor is associated with the core the holoenzyme is formed, which can initiate transcription.

It catalyses the reaction RNA(n) + a ribonucleoside 5'-triphosphate = RNA(n+1) + diphosphate. Functionally, DNA-dependent RNA polymerase catalyzes the transcription of DNA into RNA using the four ribonucleoside triphosphates as substrates. In Staphylococcus aureus (strain COL), this protein is DNA-directed RNA polymerase subunit beta.